Here is a 372-residue protein sequence, read N- to C-terminus: Pyrimidine monooxygenase RutA (372 aa).

Residues 57-58 (IK), N123, E132, 148-149 (RY), and S198 contribute to the FMN site.

This sequence belongs to the NtaA/SnaA/DszA monooxygenase family. RutA subfamily.

The catalysed reaction is uracil + FMNH2 + NADH + O2 = (Z)-3-ureidoacrylate + FMN + NAD(+) + H2O + H(+). It catalyses the reaction thymine + FMNH2 + NADH + O2 = (Z)-2-methylureidoacrylate + FMN + NAD(+) + H2O + H(+). Catalyzes the pyrimidine ring opening between N-3 and C-4 by an unusual flavin hydroperoxide-catalyzed mechanism, adding oxygen atoms in the process to yield ureidoacrylate peracid, that immediately reacts with FMN forming ureidoacrylate and FMN-N(5)-oxide. The FMN-N(5)-oxide reacts spontaneously with NADH to produce FMN. Requires the flavin reductase RutF to regenerate FMN in vivo. This chain is Pyrimidine monooxygenase RutA, found in Methylorubrum extorquens (strain PA1) (Methylobacterium extorquens).